Reading from the N-terminus, the 495-residue chain is MSLLIRGATVVTHEESYPADVLCVDGLIRAIGPNLEPPTDCEILDGSGQYLMPGGIDPHTHMQLPFMGTVASEDFFSGTAAGLAGGTTSIIDFVIPNPQQSLLEAFHTWRGWAQKSASDYGFHVAITWWSEQVAEEMGELVAKHGVNSFKHFMAYKNAIMAADDTLVASFERCLQLGAVPTVHAENGELVYHLQKKLLAQGMTGPEAHPLSRPSQVEGEAASRAIRIAETIGTPLYVVHISSREALDEITYARAKGQPVYGEVLPGHLLLDDSVYRDPDWATAAGYVMSPPFRPREHQEALWRGLQSGNLHTTATDHCCFCAEQKAMGRDDFSRIPNGTAGIEDRMAVLWDAGVNSGRLSMHEFVALTSTNTAKIFNLFPRKGAIRVGADADLVLWDPQGTRTLSAQTHHQRVDFNIFEGRTVRGVPSHTISQGKVLWADGDLRRRGRGGAVCGTAGVSVGVRGAGATRRTAAPDARSALRPLGLLRSPSPASQI.

His59, His61, and Lys150 together coordinate Zn(2+). Lys150 is subject to N6-carboxylysine. Tyr155 contributes to the substrate binding site. Residues His183 and His239 each coordinate Zn(2+). Ser289 lines the substrate pocket. Asp316 contacts Zn(2+). Asn337 is a binding site for substrate.

The protein belongs to the metallo-dependent hydrolases superfamily. Hydantoinase/dihydropyrimidinase family. Homotetramer. The cofactor is Zn(2+). Carboxylation allows a single lysine to coordinate two zinc ions.

It carries out the reaction 5,6-dihydrouracil + H2O = 3-(carbamoylamino)propanoate + H(+). Functionally, catalyzes the hydrolysis of dihydropyrimidines and of the structurally related DL-5-mono-substituted hydantoins, to produce N-carbamoyl-D-amino acids. The protein is D-hydantoinase/dihydropyrimidinase of Pseudomonas putida (Arthrobacter siderocapsulatus).